The sequence spans 208 residues: Putative dioxygenase RF_0617 (208 aa).

It belongs to the intradiol ring-cleavage dioxygenase family.

The protein is Putative dioxygenase RF_0617 of Rickettsia felis (strain ATCC VR-1525 / URRWXCal2) (Rickettsia azadi).